A 73-amino-acid chain; its full sequence is Translation initiation factor IF-1 (73 aa).

Residues 1-72 (MAKDDVIEVE…TKGRITYRFI (72 aa)) form the S1-like domain.

This sequence belongs to the IF-1 family. Component of the 30S ribosomal translation pre-initiation complex which assembles on the 30S ribosome in the order IF-2 and IF-3, IF-1 and N-formylmethionyl-tRNA(fMet); mRNA recruitment can occur at any time during PIC assembly.

Its subcellular location is the cytoplasm. Functionally, one of the essential components for the initiation of protein synthesis. Stabilizes the binding of IF-2 and IF-3 on the 30S subunit to which N-formylmethionyl-tRNA(fMet) subsequently binds. Helps modulate mRNA selection, yielding the 30S pre-initiation complex (PIC). Upon addition of the 50S ribosomal subunit IF-1, IF-2 and IF-3 are released leaving the mature 70S translation initiation complex. This Lactobacillus acidophilus (strain ATCC 700396 / NCK56 / N2 / NCFM) protein is Translation initiation factor IF-1.